The primary structure comprises 258 residues: NAD kinase (258 aa).

D45 (proton acceptor) is an active-site residue. NAD(+)-binding positions include 45–46, 117–118, D147, A155, 158–163, and A182; these read DG, NE, and TAYNYS.

The protein belongs to the NAD kinase family. It depends on a divalent metal cation as a cofactor.

It is found in the cytoplasm. The catalysed reaction is NAD(+) + ATP = ADP + NADP(+) + H(+). Functionally, involved in the regulation of the intracellular balance of NAD and NADP, and is a key enzyme in the biosynthesis of NADP. Catalyzes specifically the phosphorylation on 2'-hydroxyl of the adenosine moiety of NAD to yield NADP. The protein is NAD kinase of Xanthomonas oryzae pv. oryzae (strain MAFF 311018).